Consider the following 351-residue polypeptide: dTDP-glucose 4,6-dehydratase (351 aa).

Residues 12 to 13 (FI), 32 to 35 (DALT), 58 to 59 (DI), 80 to 84 (FAAES), and T99 each bind NAD(+). S84 serves as a coordination point for substrate. A substrate-binding site is contributed by T133. D134 (proton donor) is an active-site residue. Active-site proton acceptor residues include E135 and Y158. 158-162 (YSASK) is a binding site for NAD(+). N187 contributes to the substrate binding site. N188 contacts NAD(+). Substrate is bound by residues 197-198 (KL), 213-215 (PVY), R222, N257, and 289-293 (DRPGH).

It belongs to the NAD(P)-dependent epimerase/dehydratase family. dTDP-glucose dehydratase subfamily. Homodimer. NAD(+) serves as cofactor.

It catalyses the reaction dTDP-alpha-D-glucose = dTDP-4-dehydro-6-deoxy-alpha-D-glucose + H2O. The protein operates within carbohydrate biosynthesis; dTDP-L-rhamnose biosynthesis. Its pathway is bacterial outer membrane biogenesis; LPS O-antigen biosynthesis. Catalyzes the dehydration of dTDP-D-glucose to form dTDP-6-deoxy-D-xylo-4-hexulose via a three-step process involving oxidation, dehydration and reduction. The polypeptide is dTDP-glucose 4,6-dehydratase (rfbB) (Xanthomonas campestris pv. campestris (strain B100)).